Consider the following 71-residue polypeptide: Protein SlyX homolog (71 aa).

Belongs to the SlyX family.

This chain is Protein SlyX homolog, found in Rhodopseudomonas palustris (strain HaA2).